We begin with the raw amino-acid sequence, 174 residues long: Cuticle protein 1 (174 aa).

A signal peptide spans 1–18; the sequence is MRFLIAFVAILGYASASA.

It localises to the secreted. This chain is Cuticle protein 1, found in Lonomia obliqua (Moth).